We begin with the raw amino-acid sequence, 554 residues long: Zinc finger protein syd-9 (554 aa).

3 consecutive C2H2-type zinc fingers follow at residues 20–43 (LTCP…QMFH), 65–87 (FICE…RSVH), and 93–116 (YVCK…LKHH). Disordered regions lie at residues 136–158 (KIVT…TATP), 298–319 (SPDT…PPMA), and 342–383 (ASGQ…CPSP). The segment covering 142 to 158 (NGPTTNGSTPTTSTATP) has biased composition (low complexity). 2 stretches are compositionally biased toward polar residues: residues 351-360 (PDSTDTQKGC) and 370-379 (SDPSTSSGDS). The C2H2-type 4 zinc finger occupies 387 to 410 (LHCKECGTLVRKSSHLPIHMTMSH). Positions 516 to 554 (RMEMSLSPIKPFQQRFSRERSSSSSVERSPSRERSRSPL) are disordered. The span at 544–554 (SPSRERSRSPL) shows a compositional bias: basic and acidic residues.

As to expression, expressed mainly in body wall muscles and ventral cord motoneurons.

It localises to the nucleus. The protein localises to the nucleus speckle. Its function is as follows. Plays a role in regulating synaptic function, probably by modulation of endocytosis. May be dispensable in muscle for normal locomotion. May be involved in post-transcriptional mRNA processing, in parallel with unc-75. The protein is Zinc finger protein syd-9 of Caenorhabditis elegans.